The sequence spans 607 residues: Phosphogluconate dehydratase (607 aa).

[4Fe-4S] cluster-binding residues include cysteine 156 and cysteine 223.

This sequence belongs to the IlvD/Edd family. [4Fe-4S] cluster is required as a cofactor.

The catalysed reaction is 6-phospho-D-gluconate = 2-dehydro-3-deoxy-6-phospho-D-gluconate + H2O. It participates in carbohydrate metabolism; Entner-Doudoroff pathway. Functionally, catalyzes the dehydration of 6-phospho-D-gluconate to 2-dehydro-3-deoxy-6-phospho-D-gluconate. The polypeptide is Phosphogluconate dehydratase (Zymomonas mobilis subsp. mobilis (strain ATCC 31821 / ZM4 / CP4)).